A 324-amino-acid polypeptide reads, in one-letter code: Fibronectin type III domain-containing protein 8 (324 aa).

The region spanning 179–280 is the Fibronectin type-III domain; sequence PDTPFIFEHT…KPYKFATLAT (102 aa).

This chain is Fibronectin type III domain-containing protein 8 (FNDC8), found in Homo sapiens (Human).